A 183-amino-acid polypeptide reads, in one-letter code: Adenine phosphoribosyltransferase (183 aa).

It belongs to the purine/pyrimidine phosphoribosyltransferase family. Homodimer.

The protein resides in the cytoplasm. It catalyses the reaction AMP + diphosphate = 5-phospho-alpha-D-ribose 1-diphosphate + adenine. It participates in purine metabolism; AMP biosynthesis via salvage pathway; AMP from adenine: step 1/1. Catalyzes a salvage reaction resulting in the formation of AMP, that is energically less costly than de novo synthesis. This Klebsiella pneumoniae (strain 342) protein is Adenine phosphoribosyltransferase.